The primary structure comprises 121 residues: Large ribosomal subunit protein uL14 (121 aa).

Belongs to the universal ribosomal protein uL14 family. In terms of assembly, part of the 50S ribosomal subunit. Forms a cluster with proteins L3 and L19. In the 70S ribosome, L14 and L19 interact and together make contacts with the 16S rRNA in bridges B5 and B8.

In terms of biological role, binds to 23S rRNA. Forms part of two intersubunit bridges in the 70S ribosome. In Prochlorococcus marinus (strain MIT 9313), this protein is Large ribosomal subunit protein uL14.